The primary structure comprises 1169 residues: Pesticidal crystal protein Cry8Ba (1169 aa).

Residues 1–26 are disordered; that stretch reads MSPNNQNEYEIIDATPSTSVSNDSNR. The span at 15 to 25 shows a compositional bias: polar residues; sequence TPSTSVSNDSN.

Belongs to the delta endotoxin family.

Functionally, promotes colloidosmotic lysis by binding to the midgut epithelial cells of insects. Active on various scarabaeid beetles. This Bacillus thuringiensis serovar kumamotoensis protein is Pesticidal crystal protein Cry8Ba (cry8Ba).